A 179-amino-acid polypeptide reads, in one-letter code: MSKDLEVAGRYANALFQVAQDKDLVDVFSEELTELKAALKANKDFVKLLENPTFTTEQKKNLASAVFEKINPTLRDFIYLLIDRSREDYLSVIADVYQKRVNDLRGVADADVYSVVPLSEQELTALSRVFATKMNKTKLNIQNHIDKSLLGGVKVVIGTRIYDDSLKTKLKDMERQIKA.

Belongs to the ATPase delta chain family. As to quaternary structure, F-type ATPases have 2 components, F(1) - the catalytic core - and F(0) - the membrane proton channel. F(1) has five subunits: alpha(3), beta(3), gamma(1), delta(1), epsilon(1). F(0) has three main subunits: a(1), b(2) and c(10-14). The alpha and beta chains form an alternating ring which encloses part of the gamma chain. F(1) is attached to F(0) by a central stalk formed by the gamma and epsilon chains, while a peripheral stalk is formed by the delta and b chains.

It localises to the cell membrane. Functionally, f(1)F(0) ATP synthase produces ATP from ADP in the presence of a proton or sodium gradient. F-type ATPases consist of two structural domains, F(1) containing the extramembraneous catalytic core and F(0) containing the membrane proton channel, linked together by a central stalk and a peripheral stalk. During catalysis, ATP synthesis in the catalytic domain of F(1) is coupled via a rotary mechanism of the central stalk subunits to proton translocation. Its function is as follows. This protein is part of the stalk that links CF(0) to CF(1). It either transmits conformational changes from CF(0) to CF(1) or is implicated in proton conduction. This chain is ATP synthase subunit delta, found in Listeria monocytogenes serovar 1/2a (strain ATCC BAA-679 / EGD-e).